We begin with the raw amino-acid sequence, 134 residues long: Ribosome-binding factor A (134 aa).

The protein belongs to the RbfA family. In terms of assembly, monomer. Binds 30S ribosomal subunits, but not 50S ribosomal subunits or 70S ribosomes.

Its subcellular location is the cytoplasm. Functionally, one of several proteins that assist in the late maturation steps of the functional core of the 30S ribosomal subunit. Associates with free 30S ribosomal subunits (but not with 30S subunits that are part of 70S ribosomes or polysomes). Required for efficient processing of 16S rRNA. May interact with the 5'-terminal helix region of 16S rRNA. The polypeptide is Ribosome-binding factor A (Synechococcus sp. (strain CC9311)).